Consider the following 302-residue polypeptide: Urease accessory protein UreD 2 (302 aa).

This sequence belongs to the UreD family. As to quaternary structure, ureD, UreF and UreG form a complex that acts as a GTP-hydrolysis-dependent molecular chaperone, activating the urease apoprotein by helping to assemble the nickel containing metallocenter of UreC. The UreE protein probably delivers the nickel.

It localises to the cytoplasm. Its function is as follows. Required for maturation of urease via the functional incorporation of the urease nickel metallocenter. The polypeptide is Urease accessory protein UreD 2 (Brucella ovis (strain ATCC 25840 / 63/290 / NCTC 10512)).